Here is an 82-residue protein sequence, read N- to C-terminus: Small ribosomal subunit protein bS16 (82 aa).

This sequence belongs to the bacterial ribosomal protein bS16 family.

This chain is Small ribosomal subunit protein bS16, found in Elusimicrobium minutum (strain Pei191).